Here is a 448-residue protein sequence, read N- to C-terminus: L-seryl-tRNA(Sec) selenium transferase (448 aa).

K284 is subject to N6-(pyridoxal phosphate)lysine.

It belongs to the SelA family. The cofactor is pyridoxal 5'-phosphate.

It localises to the cytoplasm. The catalysed reaction is L-seryl-tRNA(Sec) + selenophosphate + H(+) = L-selenocysteinyl-tRNA(Sec) + phosphate. It participates in aminoacyl-tRNA biosynthesis; selenocysteinyl-tRNA(Sec) biosynthesis; selenocysteinyl-tRNA(Sec) from L-seryl-tRNA(Sec) (bacterial route): step 1/1. Its function is as follows. Converts seryl-tRNA(Sec) to selenocysteinyl-tRNA(Sec) required for selenoprotein biosynthesis. This Nautilia profundicola (strain ATCC BAA-1463 / DSM 18972 / AmH) protein is L-seryl-tRNA(Sec) selenium transferase.